The following is a 2227-amino-acid chain: Genome polyprotein (2227 aa).

Short sequence motifs ((L)YPX(n)L motif) lie at residues 167–171 and 200–205; these read YPHGL and YPVWEL. The interval 766–836 is involved in P1-2A pentamerization; sequence MMSRIAAGDL…PRKMKGLFSQ (71 aa). A helical transmembrane segment spans residues 1010 to 1030; it reads VTVEIINTVLCFVKSGILLYV. Residues 1043–1070 are membrane-penetrating ability; sequence IGLLRVMNYADIGCSVISCGKVFSKMLE. Residues 1127–1152 adopt a coiled-coil conformation; it reads KKKDVLNVLKDNQQKIERAIEEADNF. An SF3 helicase domain is found at 1204 to 1366; sequence HQKLKNLGSI…SFFKNPHNDM (163 aa). 1230 to 1237 is an ATP binding site; that stretch reads GKRGGGKS. A helical membrane pass occupies residues 1462–1482; that stretch reads WVAVGAAVGILGVLVGGWFVY. Residue Tyr1499 is modified to O-(5'-phospho-RNA)-tyrosine. A Peptidase C3 domain is found at 1514-1728; the sequence is DPVESQSTLE…VAKLVTQEMF (215 aa). Active-site for protease 3C activity residues include His1563, Asp1603, and Cys1691. The 122-residue stretch at 1976-2097 folds into the RdRp catalytic domain; it reads DVGLDLDFSA…VFSRDIQIDN (122 aa). Residue Asp2083 is the For RdRp activity of the active site.

It belongs to the picornaviridae polyprotein family. In terms of assembly, homodimer. Homomultimer; probably interacts with membranes in a multimeric form. Seems to assemble into amyloid-like fibers. As to quaternary structure, homodimer. Monomer. Interacts with protein 3CD. Interacts with host ACBD3. In terms of assembly, interacts with protein 3AB. As to quaternary structure, interacts with human MAVS. Homodimer; disulfide-linked. In terms of assembly, homopentamer. Homooligomer. As to quaternary structure, interacts with capsid protein VP2. Interacts with capsid protein VP3. Interacts with capsid protein VP1. Interacts with capsid protein VP3. In terms of assembly, interacts with capsid protein VP1. Interacts with capsid protein VP2. Post-translationally, specific enzymatic cleavages by viral protease in vivo yield a variety of precursors and mature proteins. Polyprotein processing intermediates are produced, such as P1-2A which is a functional precursor of the structural proteins, VP0 which is a VP4-VP2 precursor, VP1-2A precursor, 3ABC precursor which is a stable and catalytically active precursor of 3A, 3B and 3C proteins, 3AB and 3CD precursors. The assembly signal 2A is removed from VP1-2A by a host protease, possibly host Cathepsin L. This cleavage occurs over a region of 3 amino-acids probably generating VP1 proteins with heterogeneous C-termini. During virion maturation, immature virions are rendered infectious following cleavage of VP0 into VP4 and VP2. This maturation seems to be an autocatalytic event triggered by the presence of RNA in the capsid and is followed by a conformational change of the particle. In terms of processing, the assembly signal 2A is removed from VP1-2A by a host protease, possibly host Cathepsin L in naked virions. This cleavage does not occur in enveloped virions. This cleavage occurs over a region of 3 amino-acids probably generating VP1 proteins with heterogeneous C-termini. Post-translationally, VPg is uridylylated prior to priming replication into VPg-pUpU. Unlike other picornaviruses, does not seem to be myristoylated.

The protein resides in the virion. Its subcellular location is the host endosome. It is found in the host multivesicular body. The protein localises to the host membrane. It localises to the host mitochondrion outer membrane. The protein resides in the host cytoplasm. Its subcellular location is the host cytoplasmic vesicle membrane. It catalyses the reaction RNA(n) + a ribonucleoside 5'-triphosphate = RNA(n+1) + diphosphate. It carries out the reaction a ribonucleoside 5'-triphosphate + H2O = a ribonucleoside 5'-diphosphate + phosphate + H(+). The enzyme catalyses Selective cleavage of Gln-|-Gly bond in the poliovirus polyprotein. In other picornavirus reactions Glu may be substituted for Gln, and Ser or Thr for Gly.. Functionally, capsid proteins VP1, VP2, and VP3 form a closed capsid enclosing the viral positive strand RNA genome. All these proteins contain a beta-sheet structure called beta-barrel jelly roll. Together they form an icosahedral capsid (T=3) composed of 60 copies of each VP1, VP2, and VP3, with a diameter of approximately 300 Angstroms. VP1 is situated at the 12 fivefold axes, whereas VP2 and VP3 are located at the quasi-sixfold axes. The naked capsid interacts with the host receptor HAVCR1 to provide virion attachment to and probably entry into the target cell. In terms of biological role, VP0 precursor is a component of the immature procapsids. Its function is as follows. Plays a role in the assembly of the 12 pentamers into an icosahedral structure. Has not been detected in mature virions, supposedly owing to its small size. Precursor component of immature procapsids that corresponds to an extended form of the structural protein VP1. After maturation, possibly by the host Cathepsin L, the assembly signal 2A is cleaved to give rise to the mature VP1 protein. Functionally, functions as a viroporin. Affects membrane integrity and causes an increase in membrane permeability. Involved in host intracellular membrane rearrangements probably to give rise to the viral factories. Does not disrupt calcium homeostasis or glycoprotein trafficking. Antagonizes the innate immune response of the host by suppressing IFN-beta synthesis, which it achieves by interfering with the RIG-I/IFIH1 pathway. In terms of biological role, affects membrane integrity and causes an increase in membrane permeability. Its function is as follows. Associates with and induces structural rearrangements of intracellular membranes. Displays RNA-binding activity. The precursor 3ABC is targeted to the mitochondrial membrane where protease 3C activity cleaves and inhibits the host antiviral protein MAVS, thereby disrupting activation of IRF3 through the IFIH1/MDA5 pathway. In vivo, the protease activity of 3ABC precursor is more efficient in cleaving the 2BC precursor than that of protein 3C. The 3ABC precursor may therefore play a role in the proteolytic processing of the polyprotein. Possible viroporin. Functionally, interacts with the 3CD precursor and with RNA structures found at both the 5'- and 3'-termini of the viral genome. Since the 3AB precursor contains the hydrophobic domain 3A, it probably anchors the whole viral replicase complex to intracellular membranes on which viral RNA synthesis occurs. In terms of biological role, may serve as membrane anchor to the 3AB and 3ABC precursors via its hydrophobic domain. May interact with RNA. Its function is as follows. Acts as a primer for viral RNA replication and remains covalently bound to viral genomic RNA. VPg is uridylylated prior to priming replication into VPg-pUpU. The VPg-pUpU is then used as primer on the genomic RNA poly(A) by the RNA-dependent RNA polymerase to replicate the viral genome. Cysteine protease that generates mature viral proteins from the precursor polyprotein. In addition to its proteolytic activity, it binds to viral RNA, and thus influences viral genome replication. RNA and substrate bind cooperatively to the protease. Cleaves IKBKG/NEMO to impair innate immune signaling. Cleaves host PABPC1 which may participate in the switch of viral translation to RNA synthesis. Functionally, interacts with the 3AB precursor and with RNA structures found at both the 5'- and 3'-termini of the viral genome. Disrupts TLR3 signaling by degrading the host adapter protein TICAM1/TRIF. In terms of biological role, RNA-directed RNA polymerase 3D-POL replicates genomic and antigenomic RNA by recognizing replications specific signals. This Human hepatitis A virus genotype IIB (isolate SLF88) (HHAV) protein is Genome polyprotein.